A 210-amino-acid chain; its full sequence is Outer-membrane lipoprotein LolB (210 aa).

Positions 1–18 (MKKFTKILSLSTLLFLAG) are cleaved as a signal peptide. Residue Cys-19 is the site of N-palmitoyl cysteine attachment. Cys-19 carries the S-diacylglycerol cysteine lipid modification.

The protein belongs to the LolB family. Monomer.

The protein resides in the cell outer membrane. Plays a critical role in the incorporation of lipoproteins in the outer membrane after they are released by the LolA protein. The polypeptide is Outer-membrane lipoprotein LolB (Actinobacillus pleuropneumoniae serotype 5b (strain L20)).